Here is a 209-residue protein sequence, read N- to C-terminus: uncharacterized protein (209 aa).

The next 3 membrane-spanning stretches (helical) occupy residues 10 to 32 (AVVIILTRFMEAIAIIISIYLAF), 37 to 59 (LRYVLATAGVFLLSVLINLTGLI), and 64 to 86 (FIYFSLASIFLSALILTALILYV).

It is found in the cell membrane. This is an uncharacterized protein from Aquifex aeolicus (strain VF5).